The primary structure comprises 950 residues: Protocadherin alpha-3 (950 aa).

An N-terminal signal peptide occupies residues 1-29 (MLFSWREDPGAQCLLLSLLLLAASEVGSG). Cadherin domains follow at residues 30–133 (QLHY…APVF), 134–242 (PMAV…APAF), 243–350 (ERTI…VPEL), 351–455 (VIQS…APAF), 456–565 (SQSE…APAL), and 581–678 (VPRS…APKA). Topologically, residues 30 to 697 (QLHYSVSEEA…GPEAALVDVN (668 aa)) are extracellular. 2 N-linked (GlcNAc...) asparagine glycosylation sites follow: N257 and N265. N548 is a glycosylation site (N-linked (GlcNAc...) asparagine). Residues 698-718 (VYLIVAICAVSSLLVLTLLLY) traverse the membrane as a helical segment. At 719–950 (TALRCSAPPT…GNSTTDNSDQ (232 aa)) the chain is on the cytoplasmic side. PXXP repeat units follow at residues 734 to 737 (PGKP) and 774 to 777 (PSLP). A 6 X 4 AA repeats of P-X-X-P region spans residues 734-894 (PGKPTLVCSS…PDKFIIPGSP (161 aa)). Disordered stretches follow at residues 777 to 806 (PPCP…NPDW), 831 to 856 (GPGG…EVSP), and 869 to 950 (FKYG…NSDQ). Over residues 782-797 (SRDREEKQDVDVDLSA) the composition is skewed to basic and acidic residues. 4 PXXP repeats span residues 799 to 802 (PRQP), 832 to 835 (PGGP), 873 to 876 (PGNP), and 891 to 894 (PGSP). A compositionally biased stretch (basic and acidic residues) spans 909–923 (DKSDFITFGKKEETK).

The protein resides in the cell membrane. Functionally, potential calcium-dependent cell-adhesion protein. May be involved in the establishment and maintenance of specific neuronal connections in the brain. This chain is Protocadherin alpha-3 (PCDHA3), found in Homo sapiens (Human).